Reading from the N-terminus, the 184-residue chain is Photosystem I assembly protein Ycf4 (184 aa).

2 helical membrane-spanning segments follow: residues 22–42 (FCWA…GTSS) and 57–77 (IVFF…LFIS).

It belongs to the Ycf4 family.

It is found in the plastid. The protein resides in the chloroplast thylakoid membrane. Seems to be required for the assembly of the photosystem I complex. The polypeptide is Photosystem I assembly protein Ycf4 (Lactuca sativa (Garden lettuce)).